The chain runs to 407 residues: Substance-P receptor (407 aa).

The Extracellular portion of the chain corresponds to 1–31; it reads MDNVLPVDSDLFPNISTNTSEPNQFVQPAWQ. Residues N14 and N18 are each glycosylated (N-linked (GlcNAc...) asparagine). The chain crosses the membrane as a helical span at residues 32-54; sequence IVLWAAAYTVIVVTSVVGNVVVM. At 55–64 the chain is on the cytoplasmic side; the sequence is WIILAHKRMR. The chain crosses the membrane as a helical span at residues 65 to 86; that stretch reads TVTNYFLVNLAFAEASMAAFNT. Over 87–106 the chain is Extracellular; it reads VVNFTYAVHNEWYYGLFYCK. C105 and C180 form a disulfide bridge. Residues 107–128 traverse the membrane as a helical segment; that stretch reads FHNFFPIAAVFASIYSMTAVAF. Topologically, residues 129 to 148 are cytoplasmic; it reads DRYMAIIHPLQPRLSATATK. A helical membrane pass occupies residues 149–169; it reads VVICVIWVLALLLAFPQGYYS. Over 170–194 the chain is Extracellular; that stretch reads TTETMPGRVVCMIEWPSHPDKIYEK. A helical membrane pass occupies residues 195–219; the sequence is VYHICVTVLIYFLPLLVIGYAYTVV. Residues 220–248 lie on the Cytoplasmic side of the membrane; it reads GITLWASEIPGDSSDRYHEQVSAKRKVVK. Residues 249–270 traverse the membrane as a helical segment; the sequence is MMIVVVCTFAICWLPFHIFFLL. The Extracellular portion of the chain corresponds to 271-283; the sequence is PYINPDLYLKKFI. The chain crosses the membrane as a helical span at residues 284 to 308; the sequence is QQVYLAIMWLAMSSTMYNPIIYCCL. The Cytoplasmic segment spans residues 309–407; sequence NDRFRLGFKH…SSSFYSNMLS (99 aa). C322 carries S-palmitoyl cysteine lipidation. Positions 363-407 are disordered; that stretch reads GAHEEDPEEGPKATPSSLDLTSNGSSRSNSKTVTESSSFYSNMLS. Polar residues predominate over residues 376–407; that stretch reads TPSSLDLTSNGSSRSNSKTVTESSSFYSNMLS.

The protein belongs to the G-protein coupled receptor 1 family. In terms of assembly, interacts with ARRB1.

The protein localises to the cell membrane. Its function is as follows. This is a receptor for the tachykinin neuropeptide substance P. It is probably associated with G proteins that activate a phosphatidylinositol-calcium second messenger system. The rank order of affinity of this receptor to tachykinins is: substance P &gt; substance K &gt; neuromedin-K. The protein is Substance-P receptor (TACR1) of Cavia porcellus (Guinea pig).